Here is a 136-residue protein sequence, read N- to C-terminus: Large ribosomal subunit protein uL16c (136 aa).

Belongs to the universal ribosomal protein uL16 family. As to quaternary structure, part of the 50S ribosomal subunit.

The protein localises to the plastid. It is found in the chloroplast. The chain is Large ribosomal subunit protein uL16c from Chlamydomonas reinhardtii (Chlamydomonas smithii).